The following is a 317-amino-acid chain: UDP-3-O-acylglucosamine N-acyltransferase (317 aa).

Residue His-229 is the Proton acceptor of the active site.

This sequence belongs to the transferase hexapeptide repeat family. LpxD subfamily. In terms of assembly, homotrimer.

It carries out the reaction a UDP-3-O-[(3R)-3-hydroxyacyl]-alpha-D-glucosamine + a (3R)-hydroxyacyl-[ACP] = a UDP-2-N,3-O-bis[(3R)-3-hydroxyacyl]-alpha-D-glucosamine + holo-[ACP] + H(+). It participates in bacterial outer membrane biogenesis; LPS lipid A biosynthesis. In terms of biological role, catalyzes the N-acylation of UDP-3-O-acylglucosamine using 3-hydroxyacyl-ACP as the acyl donor. Is involved in the biosynthesis of lipid A, a phosphorylated glycolipid that anchors the lipopolysaccharide to the outer membrane of the cell. The chain is UDP-3-O-acylglucosamine N-acyltransferase from Campylobacter concisus (strain 13826).